A 656-amino-acid chain; its full sequence is DNA ligase (656 aa).

NAD(+)-binding positions include 32–36 (DAVYD) and 81–82 (SL). Residue Lys112 is the N6-AMP-lysine intermediate of the active site. NAD(+)-binding residues include Arg133, Glu167, and Lys306. Residues Cys400, Cys403, Cys416, and Cys421 each contribute to the Zn(2+) site. The BRCT domain occupies 577–656 (KSSSVFSDKT…ELLKRLKELD (80 aa)).

This sequence belongs to the NAD-dependent DNA ligase family. LigA subfamily. It depends on Mg(2+) as a cofactor. The cofactor is Mn(2+).

It carries out the reaction NAD(+) + (deoxyribonucleotide)n-3'-hydroxyl + 5'-phospho-(deoxyribonucleotide)m = (deoxyribonucleotide)n+m + AMP + beta-nicotinamide D-nucleotide.. DNA ligase that catalyzes the formation of phosphodiester linkages between 5'-phosphoryl and 3'-hydroxyl groups in double-stranded DNA using NAD as a coenzyme and as the energy source for the reaction. It is essential for DNA replication and repair of damaged DNA. The sequence is that of DNA ligase from Helicobacter pylori (strain J99 / ATCC 700824) (Campylobacter pylori J99).